The following is a 173-amino-acid chain: Adenine phosphoribosyltransferase (173 aa).

Belongs to the purine/pyrimidine phosphoribosyltransferase family. In terms of assembly, homodimer.

The protein localises to the cytoplasm. The catalysed reaction is AMP + diphosphate = 5-phospho-alpha-D-ribose 1-diphosphate + adenine. It functions in the pathway purine metabolism; AMP biosynthesis via salvage pathway; AMP from adenine: step 1/1. Functionally, catalyzes a salvage reaction resulting in the formation of AMP, that is energically less costly than de novo synthesis. This Methanococcus vannielii (strain ATCC 35089 / DSM 1224 / JCM 13029 / OCM 148 / SB) protein is Adenine phosphoribosyltransferase.